The sequence spans 180 residues: Nucleoid-associated protein At4g30620, chloroplastic (180 aa).

A chloroplast-targeting transit peptide spans 1 to 48 (MASTATNTDFFKTLLSPFSNGNAAQRSSRQNIVWLNRKQSGNNNRSLR). Positions 45-65 (RSLRVNGLFGGGKKDNKEDGQ) are disordered. The segment covering 56–65 (GKKDNKEDGQ) has biased composition (basic and acidic residues).

It belongs to the YbaB/EbfC family. Homodimer. Binds to the translation initiation factors TIF3E1.

Its subcellular location is the plastid. The protein resides in the chloroplast. Functionally, binds to DNA and alters its conformation. May be involved in regulation of gene expression, nucleoid organization and DNA protection. This Arabidopsis thaliana (Mouse-ear cress) protein is Nucleoid-associated protein At4g30620, chloroplastic.